We begin with the raw amino-acid sequence, 282 residues long: Pantothenate synthetase (282 aa).

Residue 28-35 coordinates ATP; it reads MGALHSGH. His35 (proton donor) is an active-site residue. (R)-pantoate is bound at residue Gln59. Position 59 (Gln59) interacts with beta-alanine. 146 to 149 lines the ATP pocket; the sequence is GEKD. Gln152 provides a ligand contact to (R)-pantoate. ATP is bound by residues Val175 and 183–186; that span reads LSSR.

Belongs to the pantothenate synthetase family. Homodimer.

It is found in the cytoplasm. It catalyses the reaction (R)-pantoate + beta-alanine + ATP = (R)-pantothenate + AMP + diphosphate + H(+). The protein operates within cofactor biosynthesis; (R)-pantothenate biosynthesis; (R)-pantothenate from (R)-pantoate and beta-alanine: step 1/1. In terms of biological role, catalyzes the condensation of pantoate with beta-alanine in an ATP-dependent reaction via a pantoyl-adenylate intermediate. In Salinispora arenicola (strain CNS-205), this protein is Pantothenate synthetase.